The sequence spans 443 residues: Leucine/methionine racemase (443 aa).

Residues 110-111 (GS) and Q247 each bind pyridoxal 5'-phosphate. K273 carries the N6-(pyridoxal phosphate)lysine modification. Position 302 (T302) interacts with pyridoxal 5'-phosphate.

This sequence belongs to the class-III pyridoxal-phosphate-dependent aminotransferase family. It depends on pyridoxal 5'-phosphate as a cofactor.

The catalysed reaction is L-leucine = D-leucine. It catalyses the reaction L-methionine = D-methionine. Its activity is regulated as follows. Activity is strongly inhibited by several metal ions, including Co(2+), Zn(2+), Ni(2+), Cu(2+) and Fe(3+), and nonsubstrate amino acids such as L-arginine and L-lysine. Activity is completely abolished in the presence of hydroxylamine, an inhibitor of pyridoxal phosphate-dependent enzymes. Amino acid racemase with moderate substrate specificity. Is primarily active toward leucine, which is the preferred substrate, and methionine. Also exhibits lower levels of activity toward phenylalanine, alanine and serine. In Thermococcus litoralis (strain ATCC 51850 / DSM 5473 / JCM 8560 / NS-C), this protein is Leucine/methionine racemase.